The primary structure comprises 84 residues: Large ribosomal subunit protein bL27 (84 aa).

Belongs to the bacterial ribosomal protein bL27 family.

The chain is Large ribosomal subunit protein bL27 from Kocuria rhizophila (strain ATCC 9341 / DSM 348 / NBRC 103217 / DC2201).